We begin with the raw amino-acid sequence, 346 residues long: Leucine zipper protein 2 (346 aa).

A signal peptide spans 1–17; the sequence is MKFIGAVYLLFLLPALS. N-linked (GlcNAc...) asparagine glycosylation is found at asparagine 19 and asparagine 131. Residues 41-209 adopt a coiled-coil conformation; the sequence is RHLSKTSKEL…QLKALKDTVH (169 aa). The tract at residues 162–190 is leucine-zipper; the sequence is LRYGKKDLIFKGQQLMDLENKLKVAKDEL. N-linked (GlcNAc...) asparagine glycosylation is found at asparagine 241 and asparagine 296. Positions 271–346 are disordered; it reads SAVMRRESTG…LKKTQSDKHN (76 aa). The segment covering 293 to 324 has biased composition (polar residues); it reads CSHNQTESSSVMKKTFGHSQSKTPEQNGQGQA. A compositionally biased stretch (basic and acidic residues) spans 326 to 346; it reads TAEESVKTDGELKKTQSDKHN.

The protein localises to the secreted. This chain is Leucine zipper protein 2 (luzp2), found in Danio rerio (Zebrafish).